Consider the following 229-residue polypeptide: NAD(P)H-quinone oxidoreductase subunit K, chloroplastic (229 aa).

The [4Fe-4S] cluster site is built by Cys-43, Cys-44, Cys-108, and Cys-139.

The protein belongs to the complex I 20 kDa subunit family. In terms of assembly, NDH is composed of at least 16 different subunits, 5 of which are encoded in the nucleus. Requires [4Fe-4S] cluster as cofactor.

Its subcellular location is the plastid. It localises to the chloroplast thylakoid membrane. The catalysed reaction is a plastoquinone + NADH + (n+1) H(+)(in) = a plastoquinol + NAD(+) + n H(+)(out). The enzyme catalyses a plastoquinone + NADPH + (n+1) H(+)(in) = a plastoquinol + NADP(+) + n H(+)(out). In terms of biological role, NDH shuttles electrons from NAD(P)H:plastoquinone, via FMN and iron-sulfur (Fe-S) centers, to quinones in the photosynthetic chain and possibly in a chloroplast respiratory chain. The immediate electron acceptor for the enzyme in this species is believed to be plastoquinone. Couples the redox reaction to proton translocation, and thus conserves the redox energy in a proton gradient. The polypeptide is NAD(P)H-quinone oxidoreductase subunit K, chloroplastic (Piper cenocladum (Ant piper)).